The primary structure comprises 1770 residues: Transposon Ty2-OR1 Gag-Pol polyprotein (1770 aa).

2 stretches are compositionally biased toward polar residues: residues 1-39 and 49-60; these read MESQ…SASN and KVNSQQETTPGT. Disordered regions lie at residues 1–88 and 359–449; these read MESQ…YQQH and QHSE…SNDE. Residues 295-397 are RNA-binding; the sequence is ENNINVSDRL…SSKPRAAKAH (103 aa). Low complexity predominate over residues 369–381; that stretch reads TSPNTTNTKVTTR. Composition is skewed to polar residues over residues 399–408 and 415–435; these read IATSSKFSRV and ESTV…GQQQ. Asp-457 (for protease activity; shared with dimeric partner) is an active-site residue. Residues 579–636 form an integrase-type zinc finger-like region; sequence NVNKSKSVNKYPYPLIHRMLGHANFRSIQKSLKKNAVTYLKESDIEWSNASTYQCPDC. Residues 656–831 enclose the Integrase catalytic domain; sequence ESYEPFQYLH…AGLDITTILP (176 aa). Mg(2+) contacts are provided by Asp-667 and Asp-732. 3 stretches are compositionally biased toward polar residues: residues 916 to 929, 1009 to 1024, and 1065 to 1082; these read FIEQ…YDQN, ESDT…FTAR, and QRNS…STPS. Disordered stretches follow at residues 916 to 935, 1005 to 1038, and 1057 to 1205; these read FIEQ…SDHD, GGTI…MIDL, and GGTE…TEIE. The short motif at 1193–1227 is the Bipartite nuclear localization signal element; sequence KKRSLEDNETEIEVSRDTWNNKNMRSLEPPRSKKR. Residues 1353–1491 enclose the Reverse transcriptase Ty1/copia-type domain; it reads NDYYITQLDI…DILGLEIKYQ (139 aa). Mg(2+) contacts are provided by Asp-1361, Asp-1442, Asp-1443, Asp-1625, Glu-1667, and Asp-1700. The RNase H Ty1/copia-type domain occupies 1625 to 1767; that stretch reads DASYGNQPYY…IKTFKLLTNK (143 aa).

As to quaternary structure, the capsid protein forms a homotrimer, from which the VLPs are assembled. The protease is a homodimer, whose active site consists of two apposed aspartic acid residues. In terms of processing, initially, virus-like particles (VLPs) are composed of the structural unprocessed proteins Gag and Gag-Pol, and also contain the host initiator methionine tRNA (tRNA(i)-Met) which serves as a primer for minus-strand DNA synthesis, and a dimer of genomic Ty RNA. Processing of the polyproteins occurs within the particle and proceeds by an ordered pathway, called maturation. First, the protease (PR) is released by autocatalytic cleavage of the Gag-Pol polyprotein, and this cleavage is a prerequisite for subsequent processing at the remaining sites to release the mature structural and catalytic proteins. Maturation takes place prior to the RT reaction and is required to produce transposition-competent VLPs.

Its subcellular location is the cytoplasm. The protein resides in the nucleus. It carries out the reaction DNA(n) + a 2'-deoxyribonucleoside 5'-triphosphate = DNA(n+1) + diphosphate. The enzyme catalyses Endonucleolytic cleavage to 5'-phosphomonoester.. Its function is as follows. Capsid protein (CA) is the structural component of the virus-like particle (VLP), forming the shell that encapsulates the retrotransposons dimeric RNA genome. The particles are assembled from trimer-clustered units and there are holes in the capsid shells that allow for the diffusion of macromolecules. CA also has nucleocapsid-like chaperone activity, promoting primer tRNA(i)-Met annealing to the multipartite primer-binding site (PBS), dimerization of Ty2 RNA and initiation of reverse transcription. Functionally, the aspartyl protease (PR) mediates the proteolytic cleavages of the Gag and Gag-Pol polyproteins after assembly of the VLP. In terms of biological role, reverse transcriptase/ribonuclease H (RT) is a multifunctional enzyme that catalyzes the conversion of the retro-elements RNA genome into dsDNA within the VLP. The enzyme displays a DNA polymerase activity that can copy either DNA or RNA templates, and a ribonuclease H (RNase H) activity that cleaves the RNA strand of RNA-DNA heteroduplexes during plus-strand synthesis and hydrolyzes RNA primers. The conversion leads to a linear dsDNA copy of the retrotransposon that includes long terminal repeats (LTRs) at both ends. Integrase (IN) targets the VLP to the nucleus, where a subparticle preintegration complex (PIC) containing at least integrase and the newly synthesized dsDNA copy of the retrotransposon must transit the nuclear membrane. Once in the nucleus, integrase performs the integration of the dsDNA into the host genome. The protein is Transposon Ty2-OR1 Gag-Pol polyprotein (TY2B-OR1) of Saccharomyces cerevisiae (strain ATCC 204508 / S288c) (Baker's yeast).